The sequence spans 3176 residues: Large tegument protein deneddylase (3176 aa).

The span at 1–12 shows a compositional bias: polar residues; the sequence is MSNGDWGQSQRP. Residues 1–28 form a disordered region; the sequence is MSNGDWGQSQRPRGTGPMRGIRTMDVNA. Positions 1 to 268 are deubiquitination activity; the sequence is MSNGDWGQSQ…YEANGSGFDL (268 aa). Positions 41-258 constitute a Peptidase C76 domain; that stretch reads LGTASCNQAH…MLEHYGVYDF (218 aa). Active-site residues include cysteine 61, aspartate 193, and histidine 195. Residues 319–342 are disordered; it reads PAARYSPAKTNSPPPSPASAAPAS. 5 repeat units span residues 335-339, 340-344, 345-349, 350-354, and 355-359. The 10 X 5 AA approximate repeats of P-A-S-A-A stretch occupies residues 335–384; it reads PASAAPASAAPASAAPASAAPASAAQASVAPASVAPASAAPASAAPDSAA. One copy of the 6; approximate repeat lies at 360-364; it reads QASVA. The stretch at 365-369 is one 7; approximate repeat; sequence PASVA. Tandem repeats lie at residues 370–374 and 375–379. The segment covering 376-386 has biased composition (low complexity); it reads ASAAPDSAAPA. Disordered stretches follow at residues 376–683, 928–950, 1170–1193, 1435–1461, 2610–3008, and 3023–3043; these read ASAA…GSGL, LLSG…SIYR, APIS…TPPL, LMET…RARE, GLVS…PGAR, and TYTV…KMPK. The stretch at 380–384 is one 10; approximate repeat; it reads PDSAA. Residues 457-488 show a composition bias toward pro residues; sequence PRPPVPPHRPPSAARLPPPVIPIPHQSPPASP. The segment covering 519-546 has biased composition (low complexity); that stretch reads AAPSNPEIPLTTPSPSPTAAAAPTATTL. Residues 579 to 636 are compositionally biased toward pro residues; sequence APSPLLPQQQPPPSAAPAPSPLLPQQQPPPSAARAPSPLPPQQQPLPSATPAPPPAQQ. The segment at 581 to 611 is interaction with inner tegument protein; sequence SPLLPQQQPPPSAAPAPSPLLPQQQPPPSAA. The segment covering 1170 to 1182 has biased composition (low complexity); sequence APISPASPSATPA. A compositionally biased stretch (polar residues) spans 2619–2630; sequence SADNTPASSDRL. Positions 2643-2654 are enriched in low complexity; it reads EGSTTAESEASG. The span at 2738 to 2747 shows a compositional bias: pro residues; that stretch reads QPAPQQPPSS. Composition is skewed to polar residues over residues 2761 to 2772 and 2811 to 2831; these read SPHSTPSTASGS and SAAS…SSQD. A compositionally biased stretch (basic and acidic residues) spans 2839-2854; sequence MQREKKQQGGREEAAE. 2 stretches are compositionally biased toward low complexity: residues 2872 to 2886 and 2901 to 2912; these read APVV…ATPA and APALGSGLAAPA.

Belongs to the herpesviridae large tegument protein family. As to quaternary structure, interacts with host CUL1 and CUL4A; these interactions inhibit the E3 ligase activity of cullins. Interacts with inner tegument protein. Interacts with capsid vertex specific component CVC2. Interacts with the major capsid protein/MCP. Interacts with host TRIM25 and YWHAZ.

It localises to the virion tegument. It is found in the host cytoplasm. The protein localises to the host nucleus. It catalyses the reaction Thiol-dependent hydrolysis of ester, thioester, amide, peptide and isopeptide bonds formed by the C-terminal Gly of ubiquitin (a 76-residue protein attached to proteins as an intracellular targeting signal).. Its function is as follows. Large tegument protein that plays multiple roles in the viral cycle. During viral entry, remains associated with the capsid while most of the tegument is detached and participates in the capsid transport toward the host nucleus. Plays a role in the routing of the capsid at the nuclear pore complex and subsequent uncoating. Within the host nucleus, acts as a deneddylase and promotes the degradation of nuclear CRLs (cullin-RING ubiquitin ligases) and thereby stabilizes nuclear CRL substrates, while cytoplasmic CRLs remain unaffected. These modifications prevent host cell cycle S-phase progression and create a favorable environment allowing efficient viral genome replication. Participates later in the secondary envelopment of capsids. Indeed, plays a linker role for the association of the outer viral tegument to the capsids together with the inner tegument protein. Counteracts host TLR-mediated NF-kappa-B activation through both MYD88 and TICAM1-dependent pathways by interfering with 'Lys-63'- and 'Lys-48'-linked ubiquitination of signaling intermediates such as TRAF6 and IKBKG. Inhibits type I interferon production by forming a tri-molecular complex with host TRIM25 and 14-3-3 thereby promoting TRIM25 autoubiquitination and sequestration of the ligase into inactive protein aggregates. In turn, host RIGI is recruited to the complex but ubiquitination is severely impaired leading to inhibition of the pathway. Also catalyzes the removal of 'Lys-48'- and 'Lys-63'-linked ubiquitin chains on host TBK1 and STING1 suppressing cGAS-STING signaling in addition to the RIGI-MAVS pathway. Inhibits selective autophagy by deubiquitinating host SQSTM1. In turn, decreased SQSTM1 ubiquitination fails to recruit LC3 to SQSTM1-positive aggregates. In the host nucleus, deubiquitinates topoisomerase II subunits TOP2A and TOP2B thereby stabilizing SUMOylated TOP2 which halts the DNA damage response to TOP2-induced double strand DNA breaks and promotes cell survival. The chain is Large tegument protein deneddylase from Homo sapiens (Human).